Reading from the N-terminus, the 492-residue chain is Phosphatidylglycerol--prolipoprotein diacylglyceryl transferase (492 aa).

A run of 9 helical transmembrane segments spans residues 40–60 (IFGIGWALLFLLIAVLAYVGW), 72–92 (AIRQIAGFAVMAAVILVVVVP), 106–126 (VAVRGYGMFLMLAAIASVGLA), 133–153 (AGLGADSILQLAPWTFIGGLL), 184–204 (QGGLVVYGGFIGGFIASLIAL), 214–234 (IGDVIIPCVFVGLLFGRLGCL), 361–381 (VWGTQIISSVFAAIMFVVLLI), 409–429 (GVLMLVGFIAYGVLRIVLEWI), and 441–461 (LSISQWVSLVVIAASLVTLFI). R230 contacts a 1,2-diacyl-sn-glycero-3-phospho-(1'-sn-glycerol).

It belongs to the Lgt family.

The protein localises to the cell inner membrane. It carries out the reaction L-cysteinyl-[prolipoprotein] + a 1,2-diacyl-sn-glycero-3-phospho-(1'-sn-glycerol) = an S-1,2-diacyl-sn-glyceryl-L-cysteinyl-[prolipoprotein] + sn-glycerol 1-phosphate + H(+). The protein operates within protein modification; lipoprotein biosynthesis (diacylglyceryl transfer). Functionally, catalyzes the transfer of the diacylglyceryl group from phosphatidylglycerol to the sulfhydryl group of the N-terminal cysteine of a prolipoprotein, the first step in the formation of mature lipoproteins. The chain is Phosphatidylglycerol--prolipoprotein diacylglyceryl transferase from Rhodopirellula baltica (strain DSM 10527 / NCIMB 13988 / SH1).